Reading from the N-terminus, the 532-residue chain is 2,3-bisphosphoglycerate-independent phosphoglycerate mutase (532 aa).

Positions 15 and 65 each coordinate Mn(2+). The active-site Phosphoserine intermediate is the serine 65. Residues histidine 126, 156–157 (RD), arginine 188, arginine 194, 258–261 (RPDR), and lysine 331 each bind substrate. The Mn(2+) site is built by aspartate 398, histidine 402, aspartate 439, histidine 440, and histidine 457.

The protein belongs to the BPG-independent phosphoglycerate mutase family. In terms of assembly, monomer. Requires Mn(2+) as cofactor.

The enzyme catalyses (2R)-2-phosphoglycerate = (2R)-3-phosphoglycerate. The protein operates within carbohydrate degradation; glycolysis; pyruvate from D-glyceraldehyde 3-phosphate: step 3/5. In terms of biological role, catalyzes the interconversion of 2-phosphoglycerate and 3-phosphoglycerate. The chain is 2,3-bisphosphoglycerate-independent phosphoglycerate mutase from Microcystis aeruginosa (strain NIES-843 / IAM M-2473).